We begin with the raw amino-acid sequence, 168 residues long: uncharacterized protein (168 aa).

The next 4 membrane-spanning stretches (helical) occupy residues 1–21 (MFWL…AVAR), 41–61 (PYII…VLLM), 68–88 (WWLG…WALC), and 123–143 (VILE…MCLF).

The protein resides in the cell membrane. This is an uncharacterized protein from Bacillus subtilis (strain 168).